A 114-amino-acid polypeptide reads, in one-letter code: T cell receptor beta variable 3-1 (114 aa).

Residues 1 to 21 form the signal peptide; the sequence is MGCRLLCCVVFCLLQAGPLDT. An Ig-like domain is found at 22–114; it reads AVSQTPKYLV…SAVYFCASSQ (93 aa). Cys-42 and Cys-110 are disulfide-bonded. The N-linked (GlcNAc...) asparagine glycan is linked to Asn-76.

In terms of assembly, alpha-beta TR is a heterodimer composed of an alpha and beta chain; disulfide-linked. The alpha-beta TR is associated with the transmembrane signaling CD3 coreceptor proteins to form the TR-CD3 (TcR or TCR). The assembly of alpha-beta TR heterodimers with CD3 occurs in the endoplasmic reticulum where a single alpha-beta TR heterodimer associates with one CD3D-CD3E heterodimer, one CD3G-CD3E heterodimer and one CD247 homodimer forming a stable octameric structure. CD3D-CD3E and CD3G-CD3E heterodimers preferentially associate with TR alpha and TR beta chains, respectively. The association of the CD247 homodimer is the last step of TcR assembly in the endoplasmic reticulum and is required for transport to the cell surface.

It is found in the cell membrane. Its function is as follows. V region of the variable domain of T cell receptor (TR) beta chain that participates in the antigen recognition. Alpha-beta T cell receptors are antigen specific receptors which are essential to the immune response and are present on the cell surface of T lymphocytes. Recognize peptide-major histocompatibility (MH) (pMH) complexes that are displayed by antigen presenting cells (APC), a prerequisite for efficient T cell adaptive immunity against pathogens. Binding of alpha-beta TR to pMH complex initiates TR-CD3 clustering on the cell surface and intracellular activation of LCK that phosphorylates the ITAM motifs of CD3G, CD3D, CD3E and CD247 enabling the recruitment of ZAP70. In turn ZAP70 phosphorylates LAT, which recruits numerous signaling molecules to form the LAT signalosome. The LAT signalosome propagates signal branching to three major signaling pathways, the calcium, the mitogen-activated protein kinase (MAPK) kinase and the nuclear factor NF-kappa-B (NF-kB) pathways, leading to the mobilization of transcription factors that are critical for gene expression and essential for T cell growth and differentiation. The T cell repertoire is generated in the thymus, by V-(D)-J rearrangement. This repertoire is then shaped by intrathymic selection events to generate a peripheral T cell pool of self-MH restricted, non-autoaggressive T cells. Post-thymic interaction of alpha-beta TR with the pMH complexes shapes TR structural and functional avidity. The polypeptide is T cell receptor beta variable 3-1 (Homo sapiens (Human)).